Consider the following 129-residue polypeptide: Putative zinc finger protein 702 (129 aa).

3 C2H2-type zinc fingers span residues 34 to 56 (YKCDICGKVFNQKRYLAYHHRCH), 62 to 84 (YKCNQCGKTFSYKSSLVIHKAIH), and 90 to 112 (HKCNECGKVFNQKAYLASHHRLH).

The protein belongs to the krueppel C2H2-type zinc-finger protein family.

It is found in the nucleus. Functionally, may be involved in transcriptional regulation. The chain is Putative zinc finger protein 702 (ZNF702P) from Homo sapiens (Human).